Consider the following 664-residue polypeptide: Protein-arginine deiminase type-3 (664 aa).

The protein belongs to the protein arginine deiminase family. Ca(2+) serves as cofactor. As to expression, epidermis and hair follicles.

Its subcellular location is the cytoplasm. The enzyme catalyses L-arginyl-[protein] + H2O = L-citrullyl-[protein] + NH4(+). In terms of biological role, catalyzes the deimination of arginine residues of proteins. This Mus musculus (Mouse) protein is Protein-arginine deiminase type-3 (Padi3).